We begin with the raw amino-acid sequence, 148 residues long: Large ribosomal subunit protein bL9 (148 aa).

This sequence belongs to the bacterial ribosomal protein bL9 family.

Functionally, binds to the 23S rRNA. The protein is Large ribosomal subunit protein bL9 of Clostridium beijerinckii (strain ATCC 51743 / NCIMB 8052) (Clostridium acetobutylicum).